The primary structure comprises 87 residues: Protein anon-73B1 (87 aa).

Residues leucine 25 to leucine 47 traverse the membrane as a helical segment. The interval proline 52–arginine 87 is disordered. A compositionally biased stretch (basic and acidic residues) spans valine 63–arginine 72. A compositionally biased stretch (basic residues) spans threonine 73–arginine 87.

It belongs to the UPF0239 family.

It localises to the membrane. The polypeptide is Protein anon-73B1 (Drosophila erecta (Fruit fly)).